We begin with the raw amino-acid sequence, 513 residues long: ATP synthase subunit alpha (513 aa).

169 to 176 (GDRQTGKT) contributes to the ATP binding site.

It belongs to the ATPase alpha/beta chains family. F-type ATPases have 2 components, CF(1) - the catalytic core - and CF(0) - the membrane proton channel. CF(1) has five subunits: alpha(3), beta(3), gamma(1), delta(1), epsilon(1). CF(0) has three main subunits: a(1), b(2) and c(9-12). The alpha and beta chains form an alternating ring which encloses part of the gamma chain. CF(1) is attached to CF(0) by a central stalk formed by the gamma and epsilon chains, while a peripheral stalk is formed by the delta and b chains.

Its subcellular location is the cell inner membrane. The enzyme catalyses ATP + H2O + 4 H(+)(in) = ADP + phosphate + 5 H(+)(out). In terms of biological role, produces ATP from ADP in the presence of a proton gradient across the membrane. The alpha chain is a regulatory subunit. This chain is ATP synthase subunit alpha, found in Shewanella amazonensis (strain ATCC BAA-1098 / SB2B).